A 571-amino-acid chain; its full sequence is Proline--tRNA ligase (571 aa).

Belongs to the class-II aminoacyl-tRNA synthetase family. ProS type 1 subfamily. In terms of assembly, homodimer.

The protein localises to the cytoplasm. The enzyme catalyses tRNA(Pro) + L-proline + ATP = L-prolyl-tRNA(Pro) + AMP + diphosphate. Functionally, catalyzes the attachment of proline to tRNA(Pro) in a two-step reaction: proline is first activated by ATP to form Pro-AMP and then transferred to the acceptor end of tRNA(Pro). As ProRS can inadvertently accommodate and process non-cognate amino acids such as alanine and cysteine, to avoid such errors it has two additional distinct editing activities against alanine. One activity is designated as 'pretransfer' editing and involves the tRNA(Pro)-independent hydrolysis of activated Ala-AMP. The other activity is designated 'posttransfer' editing and involves deacylation of mischarged Ala-tRNA(Pro). The misacylated Cys-tRNA(Pro) is not edited by ProRS. The sequence is that of Proline--tRNA ligase from Haemophilus ducreyi (strain 35000HP / ATCC 700724).